Here is a 168-residue protein sequence, read N- to C-terminus: Scytalone dehydratase arp1 (168 aa).

Substrate is bound by residues Tyr29 and Tyr49. Active-site residues include His84 and His109. Asn130 provides a ligand contact to substrate.

Belongs to the scytalone dehydratase family. As to quaternary structure, homotrimer. Each subunit contains an active site, located in the central part of the hydrophobic core of the monomer, which functions independently.

Its subcellular location is the endosome. It catalyses the reaction scytalone = 1,3,8-trihydroxynaphthalene + H2O. Its pathway is pigment biosynthesis; melanin biosynthesis. Fenoxanil inhibits arp1 scytalone dehydratase activity. In terms of biological role, scytalone dehydratase; part of the gene cluster that mediates the biosynthesis of dihydroxynaphthalene (DHN)-melanin, a bluish-green pigment and a structural component of the conidial wall. The first step of the pathway is the production of the heptaketide naphtopyrone YWA1 by the polyketide synthase alb1 though condensation of acetyl-CoA with malonyl-CoA. The naphtopyrone YWA1 is then converted to the pentaketide 1,3,6,8-tetrahydroxynaphthalene (1,3,6,8-THN) by the heptaketide hydrolyase ayg1 though chain-length shortening. 1,3,6,8-THN is substrate of the hydroxynaphthalene reductase arp2 to yield scytalone. The scytalone dehydratase arp1 then reduces scytalone to 1,3,8-THN. 1,3,8-THN is also substrate of the hydroxynaphthalene reductase arp2 to yield vermelone. Vermelone is further converted by the multicopper oxidase abr1 to 1,8-DHN. Finally the laccase abr2 transforms 1,8-DHN to DHN-melanin. DHN-melanin biosynthesis appears to be initiated in endosomes where early enzymes (abl1, ayg1, arp1 and arp2) localize, with exocytosis leading to melanin deposition on the cell surface where late enzymes (abr1 and abr2) localize. DHN-melanin is an important structural component of the outer cell wall and is required for the presence of conidial surface hydrophobins. DHN-melanin also plays a crucial role in fungal virulence, including a protective role against the host's immune defenses. DHN-melanin also protects conidia against amoeba predation. The sequence is that of Scytalone dehydratase arp1 from Aspergillus fumigatus (strain ATCC MYA-4609 / CBS 101355 / FGSC A1100 / Af293) (Neosartorya fumigata).